The primary structure comprises 290 residues: Glycine--tRNA ligase alpha subunit (290 aa).

The protein belongs to the class-II aminoacyl-tRNA synthetase family. Tetramer of two alpha and two beta subunits.

The protein localises to the cytoplasm. It catalyses the reaction tRNA(Gly) + glycine + ATP = glycyl-tRNA(Gly) + AMP + diphosphate. The sequence is that of Glycine--tRNA ligase alpha subunit from Syntrophotalea carbinolica (strain DSM 2380 / NBRC 103641 / GraBd1) (Pelobacter carbinolicus).